The chain runs to 225 residues: UPF0758 protein MADE_1000235 (225 aa).

Residues 102–224 (VFNNVDDTKR…TISFAQRGLL (123 aa)) form the MPN domain. Positions 173, 175, and 186 each coordinate Zn(2+). A JAMM motif motif is present at residues 173 to 186 (HNHPSGVAEPSHAD).

It belongs to the UPF0758 family.

The protein is UPF0758 protein MADE_1000235 of Alteromonas mediterranea (strain DSM 17117 / CIP 110805 / LMG 28347 / Deep ecotype).